Reading from the N-terminus, the 366-residue chain is MRVIIAGGGTGGHLFPGIALAESLIGKYPEAQIIFVGTPKGLEAKVIPKTGYELSFISIQGFVGKSFSEKAKSLKSLLKSMFESKNIINSFAPDIVFGVGGYASFPVVLAAFLKKIPTIILEQNTVPGLANKLLGKIASAVAITYPETIEYFSREKTYLTGTPIRKKILEGNKEKAKKLFDIEEGRITILILGGSLGARKINKAMTEGLSYLLPLKNRIQIIHQTGEADYNWVYNEYRNLSFRATVLPFIYDMVEAYSVADLVISRAGASTVAELTAIGKASILIPYPYAAYNHQEMNARRLLSRGACELILDRELNGEVLAKKINKILNKPEIMKEMEMASLAFGKPYAGEKIIEIAESLLRRKR.

Residues 10–12, Asn124, Arg165, Ser195, Ile250, and Gln295 contribute to the UDP-N-acetyl-alpha-D-glucosamine site; that span reads TGG.

This sequence belongs to the glycosyltransferase 28 family. MurG subfamily.

The protein resides in the cell inner membrane. It catalyses the reaction di-trans,octa-cis-undecaprenyl diphospho-N-acetyl-alpha-D-muramoyl-L-alanyl-D-glutamyl-meso-2,6-diaminopimeloyl-D-alanyl-D-alanine + UDP-N-acetyl-alpha-D-glucosamine = di-trans,octa-cis-undecaprenyl diphospho-[N-acetyl-alpha-D-glucosaminyl-(1-&gt;4)]-N-acetyl-alpha-D-muramoyl-L-alanyl-D-glutamyl-meso-2,6-diaminopimeloyl-D-alanyl-D-alanine + UDP + H(+). It participates in cell wall biogenesis; peptidoglycan biosynthesis. Cell wall formation. Catalyzes the transfer of a GlcNAc subunit on undecaprenyl-pyrophosphoryl-MurNAc-pentapeptide (lipid intermediate I) to form undecaprenyl-pyrophosphoryl-MurNAc-(pentapeptide)GlcNAc (lipid intermediate II). This chain is UDP-N-acetylglucosamine--N-acetylmuramyl-(pentapeptide) pyrophosphoryl-undecaprenol N-acetylglucosamine transferase, found in Thermodesulfovibrio yellowstonii (strain ATCC 51303 / DSM 11347 / YP87).